A 119-amino-acid chain; its full sequence is Large ribosomal subunit protein bL20c (119 aa).

It belongs to the bacterial ribosomal protein bL20 family.

The protein localises to the plastid. It localises to the chloroplast. Binds directly to 23S ribosomal RNA and is necessary for the in vitro assembly process of the 50S ribosomal subunit. It is not involved in the protein synthesizing functions of that subunit. The sequence is that of Large ribosomal subunit protein bL20c (rpl20) from Pinus thunbergii (Japanese black pine).